The chain runs to 126 residues: MAQLSKDDILEAVANMSVMDVVDLVKAMEEKFGVSAQAAIAVAGPVAGGEAAAAEEKTEFNVKMVSFGDNKIGVIKAIRTITGLGLKEAKDLVESVPSVVKESVSKEEAEKIKKELEEAGAKVELE.

The protein belongs to the bacterial ribosomal protein bL12 family. As to quaternary structure, homodimer. Part of the ribosomal stalk of the 50S ribosomal subunit. Forms a multimeric L10(L12)X complex, where L10 forms an elongated spine to which 2 to 4 L12 dimers bind in a sequential fashion. Binds GTP-bound translation factors.

Functionally, forms part of the ribosomal stalk which helps the ribosome interact with GTP-bound translation factors. Is thus essential for accurate translation. This chain is Large ribosomal subunit protein bL12, found in Coxiella burnetii (strain CbuK_Q154) (Coxiella burnetii (strain Q154)).